Reading from the N-terminus, the 66-residue chain is Neurotoxin Cex11 (66 aa).

The LCN-type CS-alpha/beta domain occupies 1–64; it reads KEGYPVNIYT…SYPYPEKSCG (64 aa). Cystine bridges form between C12–C63, C16–C39, C25–C44, and C29–C46. C63 bears the Cysteine amide mark. Residues 64–66 constitute a propeptide that is removed on maturation; sequence GRK.

This sequence belongs to the long (4 C-C) scorpion toxin superfamily. Sodium channel inhibitor family. Beta subfamily. Expressed by the venom gland.

Its subcellular location is the secreted. Beta toxins bind voltage-independently at site-4 of sodium channels (Nav) and shift the voltage of activation toward more negative potentials thereby affecting sodium channel activation and promoting spontaneous and repetitive firing. In Centruroides exilicauda (Bark scorpion), this protein is Neurotoxin Cex11.